Consider the following 323-residue polypeptide: 8-oxo-dGDP phosphatase NUDT18 (323 aa).

Residues 37 to 167 form the Nudix hydrolase domain; it reads RLRKNVCYVV…DILHLVELAA (131 aa). Leucine 58 contributes to the Mg(2+) binding site. Residues 76–97 carry the Nudix box motif; sequence GRMEPGETIVEALQREVKEEAG.

The protein belongs to the Nudix hydrolase family. Requires Mn(2+) as cofactor. Mg(2+) is required as a cofactor.

It carries out the reaction 8-oxo-dGDP + H2O = 8-oxo-dGMP + phosphate + H(+). The catalysed reaction is 8-oxo-dADP + H2O = 8-oxo-dAMP + phosphate + H(+). The enzyme catalyses 2-oxo-dADP + H2O = 2-oxo-dAMP + phosphate + H(+). It catalyses the reaction 8-oxo-GDP + H2O = 8-oxo-GMP + phosphate + H(+). Its function is as follows. Mediates the hydrolysis of oxidized nucleoside diphosphate derivatives. Hydrolyzes 8-oxo-7,8-dihydroguanine (8-oxo-Gua)-containing deoxyribo- and ribonucleoside diphosphates to the monophosphates. Hydrolyzes 8-oxo-dGDP and 8-oxo-GDP with the same efficiencies. Also hydrolyzes 8-OH-dADP and 2-OH-dADP. Exhibited no or minimal hydrolysis activity against 8-oxo-dGTP, 8-oxo-GTP, dGTP, GTP, dGDP and GDP. Probably removes oxidized guanine nucleotides from both the DNA and RNA precursor pools. This Homo sapiens (Human) protein is 8-oxo-dGDP phosphatase NUDT18.